Here is a 792-residue protein sequence, read N- to C-terminus: Replication factor A (792 aa).

DNA-binding regions (OB) lie at residues 81 to 140 (VTGR…IRIK), 192 to 273 (VNVI…TSLT), 301 to 365 (VTVM…ANVE), and 422 to 494 (VDVV…VELS). The C4-type zinc-finger motif lies at 678-696 (CPSCNERLDLSDENICNFC).

In terms of assembly, probably binds DNA polymerase PolB. Binds helicase Hel308, in presence and absence of DNA.

Inhibits DNA polymerase activity of PolB, which can be overcome by RFC and PNCA. Stimulates 3'-to 5'-exonuclease activity of PolB at 30 degrees Celsius, but has no effect at 50 or 70 degrees Celsius. Bind ssDNA and replication forks; replication forks structures bind both Hel308 and this protein. Has no effect on helicase activity of Hel308; may help target the helicase to DNA substrates that require DNA re-modeling. The polypeptide is Replication factor A (rpa) (Methanothermobacter thermautotrophicus (strain ATCC 29096 / DSM 1053 / JCM 10044 / NBRC 100330 / Delta H) (Methanobacterium thermoautotrophicum)).